A 183-amino-acid chain; its full sequence is uncharacterized protein (183 aa).

The 182-residue stretch at 1-182 (MFRVVHGDIT…VALKVLERDE (182 aa)) folds into the Macro domain.

This is an uncharacterized protein from Pyrococcus abyssi (strain GE5 / Orsay).